The primary structure comprises 593 residues: Mitoguardin 2 (593 aa).

2 helical membrane-spanning segments follow: residues 11 to 31 (MIQA…TTFG) and 42 to 62 (PGLR…ALAA). 3 disordered regions span residues 98 to 134 (PSVK…HSGS), 150 to 171 (TAAC…TTDG), and 197 to 229 (VGQR…PESQ). Low complexity-rich tracts occupy residues 106–116 (SRRVQSPSSKS) and 124–134 (SSIEPSKHSGS). A Phosphoserine modification is found at S132. Positions 205–218 (STPTPGDSLQNPDT) are enriched in polar residues. T206 bears the Phosphothreonine mark. 3 positions are modified to phosphoserine: S220, S224, and S228. T273 is subject to Phosphothreonine. A phosphoserine mark is found at S276 and S295. Residues 292–298 (SFFSATE) carry the FFAT motif.

This sequence belongs to the mitoguardin family. Homodimer and heterodimer; forms heterodimers with MIGA1. Interacts with PLD6/MitoPLD. Interacts (via phosphorylated FFAT motif) with MOSPD2. In terms of processing, phosphorylation at Ser-295 of the FFAT motif activates interaction with MOSPD2.

The protein localises to the mitochondrion outer membrane. In terms of biological role, regulator of mitochondrial fusion. Acts by forming homo- and heterodimers at the mitochondrial outer membrane and facilitating the formation of PLD6/MitoPLD dimers. May act by regulating phospholipid metabolism via PLD6/MitoPLD. This Mus musculus (Mouse) protein is Mitoguardin 2.